The chain runs to 439 residues: tRNA-2-methylthio-N(6)-dimethylallyladenosine synthase (439 aa).

The MTTase N-terminal domain occupies 5–121; that stretch reads KKLFIKTYGC…LPELEAKTRA (117 aa). [4Fe-4S] cluster-binding residues include Cys14, Cys50, Cys84, Cys159, Cys163, and Cys166. One can recognise a Radical SAM core domain in the interval 145-378; it reads AKRGPTAFLT…ITRHQREIQD (234 aa). One can recognise a TRAM domain in the interval 378 to 439; that stretch reads DGMVGREVSV…GANSLAGELA (62 aa).

This sequence belongs to the methylthiotransferase family. MiaB subfamily. Monomer. [4Fe-4S] cluster serves as cofactor.

The protein resides in the cytoplasm. The enzyme catalyses N(6)-dimethylallyladenosine(37) in tRNA + (sulfur carrier)-SH + AH2 + 2 S-adenosyl-L-methionine = 2-methylsulfanyl-N(6)-dimethylallyladenosine(37) in tRNA + (sulfur carrier)-H + 5'-deoxyadenosine + L-methionine + A + S-adenosyl-L-homocysteine + 2 H(+). Its function is as follows. Catalyzes the methylthiolation of N6-(dimethylallyl)adenosine (i(6)A), leading to the formation of 2-methylthio-N6-(dimethylallyl)adenosine (ms(2)i(6)A) at position 37 in tRNAs that read codons beginning with uridine. The sequence is that of tRNA-2-methylthio-N(6)-dimethylallyladenosine synthase from Ruegeria pomeroyi (strain ATCC 700808 / DSM 15171 / DSS-3) (Silicibacter pomeroyi).